We begin with the raw amino-acid sequence, 178 residues long: Large ribosomal subunit protein uL6 (178 aa).

It belongs to the universal ribosomal protein uL6 family. As to quaternary structure, part of the 50S ribosomal subunit.

Its function is as follows. This protein binds to the 23S rRNA, and is important in its secondary structure. It is located near the subunit interface in the base of the L7/L12 stalk, and near the tRNA binding site of the peptidyltransferase center. The sequence is that of Large ribosomal subunit protein uL6 from Francisella tularensis subsp. tularensis (strain FSC 198).